Consider the following 327-residue polypeptide: Putative hydroxymethylpyrimidine/phosphomethylpyrimidine kinase C18B5.05c (327 aa).

4-amino-5-hydroxymethyl-2-methylpyrimidine is bound at residue Q54.

It belongs to the ThiD family.

It is found in the cytoplasm. It localises to the nucleus. It catalyses the reaction 4-amino-5-hydroxymethyl-2-methylpyrimidine + ATP = 4-amino-2-methyl-5-(phosphooxymethyl)pyrimidine + ADP + H(+). The enzyme catalyses 4-amino-2-methyl-5-(phosphooxymethyl)pyrimidine + ATP = 4-amino-2-methyl-5-(diphosphooxymethyl)pyrimidine + ADP. It participates in cofactor biosynthesis; thiamine diphosphate biosynthesis; 4-amino-2-methyl-5-diphosphomethylpyrimidine from 5-amino-1-(5-phospho-D-ribosyl)imidazole: step 2/3. Its pathway is cofactor biosynthesis; thiamine diphosphate biosynthesis; 4-amino-2-methyl-5-diphosphomethylpyrimidine from 5-amino-1-(5-phospho-D-ribosyl)imidazole: step 3/3. Its function is as follows. Catalyzes the phosphorylation of hydroxymethylpyrimidine phosphate (HMP-P) to HMP-PP, and of HMP to HMP-P. This is Putative hydroxymethylpyrimidine/phosphomethylpyrimidine kinase C18B5.05c from Schizosaccharomyces pombe (strain 972 / ATCC 24843) (Fission yeast).